We begin with the raw amino-acid sequence, 521 residues long: Bifunctional purine biosynthesis protein PurH (521 aa).

Residues 1–147 (MAKISRALIS…KNNADVTVLV (147 aa)) enclose the MGS-like domain.

The protein belongs to the PurH family.

The enzyme catalyses (6R)-10-formyltetrahydrofolate + 5-amino-1-(5-phospho-beta-D-ribosyl)imidazole-4-carboxamide = 5-formamido-1-(5-phospho-D-ribosyl)imidazole-4-carboxamide + (6S)-5,6,7,8-tetrahydrofolate. It catalyses the reaction IMP + H2O = 5-formamido-1-(5-phospho-D-ribosyl)imidazole-4-carboxamide. It functions in the pathway purine metabolism; IMP biosynthesis via de novo pathway; 5-formamido-1-(5-phospho-D-ribosyl)imidazole-4-carboxamide from 5-amino-1-(5-phospho-D-ribosyl)imidazole-4-carboxamide (10-formyl THF route): step 1/1. Its pathway is purine metabolism; IMP biosynthesis via de novo pathway; IMP from 5-formamido-1-(5-phospho-D-ribosyl)imidazole-4-carboxamide: step 1/1. This is Bifunctional purine biosynthesis protein PurH from Geotalea daltonii (strain DSM 22248 / JCM 15807 / FRC-32) (Geobacter daltonii).